The sequence spans 166 residues: Interferon gamma (166 aa).

The signal sequence occupies residues 1-23 (MKYTSYFLALLLCVLLGFSGSYG). Pyrrolidone carboxylic acid is present on Gln24. Asn39 and Asn106 each carry an N-linked (GlcNAc...) asparagine glycan.

The protein belongs to the type II (or gamma) interferon family. Homodimer. Interacts with IFNGR1 (via extracellular domain); this interaction promotes IFNGR1 dimerization. Released primarily from activated T lymphocytes.

It localises to the secreted. In terms of biological role, type II interferon produced by immune cells such as T-cells and NK cells that plays crucial roles in antimicrobial, antiviral, and antitumor responses by activating effector immune cells and enhancing antigen presentation. Primarily signals through the JAK-STAT pathway after interaction with its receptor IFNGR1 to affect gene regulation. Upon IFNG binding, IFNGR1 intracellular domain opens out to allow association of downstream signaling components JAK2, JAK1 and STAT1, leading to STAT1 activation, nuclear translocation and transcription of IFNG-regulated genes. Many of the induced genes are transcription factors such as IRF1 that are able to further drive regulation of a next wave of transcription. Plays a role in class I antigen presentation pathway by inducing a replacement of catalytic proteasome subunits with immunoproteasome subunits. In turn, increases the quantity, quality, and repertoire of peptides for class I MHC loading. Increases the efficiency of peptide generation also by inducing the expression of activator PA28 that associates with the proteasome and alters its proteolytic cleavage preference. Up-regulates as well MHC II complexes on the cell surface by promoting expression of several key molecules such as cathepsins B/CTSB, H/CTSH, and L/CTSL. Participates in the regulation of hematopoietic stem cells during development and under homeostatic conditions by affecting their development, quiescence, and differentiation. The polypeptide is Interferon gamma (IFNG) (Bubalus carabanensis (Swamp type water buffalo)).